We begin with the raw amino-acid sequence, 247 residues long: ATP synthase subunit a, chloroplastic (247 aa).

The next 5 helical transmembrane spans lie at 38–58 (QVLITSWVVIAILLGSAALAV), 95–115 (VPFIGTIFLFIFVSNWSGALL), 134–154 (INTTVALALLTSVAYFYAGLA), 199–219 (LVVVVLVSLVPSVVPIPVMFL), and 220–240 (GLFTSGIQALIFATLAAAYIG).

It belongs to the ATPase A chain family. F-type ATPases have 2 components, CF(1) - the catalytic core - and CF(0) - the membrane proton channel. CF(1) has five subunits: alpha(3), beta(3), gamma(1), delta(1), epsilon(1). CF(0) has four main subunits: a, b, b' and c.

It is found in the plastid. Its subcellular location is the chloroplast thylakoid membrane. Functionally, key component of the proton channel; it plays a direct role in the translocation of protons across the membrane. The sequence is that of ATP synthase subunit a, chloroplastic from Trachelium caeruleum (Blue throatwort).